The primary structure comprises 437 residues: MPKFKAARGVGGQEKHAPLADQILAGNAVRAGVREKRRGRGTGEAEEEYVGPRLSRRILQQARQQQEELEAEHGTGDKPAAPRERTTRLGPRMPQDGSDDEDEEWPTLEKAATMTAAGHHAEVVVDPEDERAIEMFMNKNPPARRTLADIIMEKLTEKQTEVETVMSEVSGFPMPQLDPRVLEVYRGVREVLSKYRSGKLPKAFKIIPALSNWEQILYVTEPEAWTAAAMYQATRIFASNLKERMAQRFYNLVLLPRVRDDVAEYKRLNFHLYMALKKALFKPGAWFKGILIPLCESGTCTLREAIIVGSIITKCSIPVLHSSAAMLKIAEMEYSGANSIFLRLLLDKKYALPYRVLDALVFHFLGFRTEKRELPVLWHQCLLTLVQRYKADLATDQKEALLELLRLQPHPQLSPEIRRELQSAVPRDVEDVPITVE.

Positions 1 to 105 are disordered; that stretch reads MPKFKAARGV…DGSDDEDEEW (105 aa). Arg-40 is subject to Omega-N-methylarginine. The residue at position 55 (Ser-55) is a Phosphoserine. Residues 71 to 87 are compositionally biased toward basic and acidic residues; that stretch reads AEHGTGDKPAAPRERTT. Position 98 is a phosphoserine (Ser-98). Position 156 is a phosphothreonine (Thr-156). 2 positions are modified to phosphoserine: Ser-167 and Ser-414.

It belongs to the bystin family. In terms of assembly, binds trophinin, tastin and cytokeratins. Found in the placenta from the sixth week of pregnancy. Was localized in the cytoplasm of the syncytiotrophoblast in the chorionic villi and in endometrial decidual cells at the uteroplacental interface. After week 10, the level decreased and then disappeared from placental villi.

It is found in the cytoplasm. The protein resides in the nucleus. It localises to the nucleolus. Functionally, required for processing of 20S pre-rRNA precursor and biogenesis of 40S ribosomal subunits. May be required for trophinin-dependent regulation of cell adhesion during implantation of human embryos. This Homo sapiens (Human) protein is Bystin.